Here is a 60-residue protein sequence, read N- to C-terminus: Large ribosomal subunit protein uL30 (60 aa).

The protein belongs to the universal ribosomal protein uL30 family. As to quaternary structure, part of the 50S ribosomal subunit.

This chain is Large ribosomal subunit protein uL30, found in Mycobacteroides abscessus (strain ATCC 19977 / DSM 44196 / CCUG 20993 / CIP 104536 / JCM 13569 / NCTC 13031 / TMC 1543 / L948) (Mycobacterium abscessus).